Consider the following 206-residue polypeptide: Small ribosomal subunit protein uS4 (206 aa).

One can recognise an S4 RNA-binding domain in the interval 96–156 (SRLDNVVYRM…NKSKNQSRIK (61 aa)).

The protein belongs to the universal ribosomal protein uS4 family. In terms of assembly, part of the 30S ribosomal subunit. Contacts protein S5. The interaction surface between S4 and S5 is involved in control of translational fidelity.

In terms of biological role, one of the primary rRNA binding proteins, it binds directly to 16S rRNA where it nucleates assembly of the body of the 30S subunit. Its function is as follows. With S5 and S12 plays an important role in translational accuracy. The chain is Small ribosomal subunit protein uS4 from Buchnera aphidicola subsp. Acyrthosiphon pisum (strain 5A).